The primary structure comprises 129 residues: Ribosome-binding factor A (129 aa).

This sequence belongs to the RbfA family. In terms of assembly, monomer. Binds 30S ribosomal subunits, but not 50S ribosomal subunits or 70S ribosomes.

It is found in the cytoplasm. Functionally, one of several proteins that assist in the late maturation steps of the functional core of the 30S ribosomal subunit. Associates with free 30S ribosomal subunits (but not with 30S subunits that are part of 70S ribosomes or polysomes). Required for efficient processing of 16S rRNA. May interact with the 5'-terminal helix region of 16S rRNA. This chain is Ribosome-binding factor A, found in Actinobacillus succinogenes (strain ATCC 55618 / DSM 22257 / CCUG 43843 / 130Z).